The primary structure comprises 345 residues: uncharacterized protein (345 aa).

Residues 1 to 98 (MNDEMKGKSG…ISGKSFIDPE (98 aa)) form a disordered region. 3 stretches are compositionally biased toward basic and acidic residues: residues 18–27 (RSDDDSDKRT), 42–68 (SRAD…EDSP), and 76–86 (PGDETPEKADH).

The protein belongs to the class IV-like SAM-binding methyltransferase superfamily. RNA methyltransferase TrmH family.

This is an uncharacterized protein from Escherichia coli O157:H7.